The following is a 249-amino-acid chain: Vesicle-associated membrane protein-associated protein A (249 aa).

A2 bears the N-acetylalanine mark. At 2–227 (ASASGAMAKH…VSFRDNVTSP (226 aa)) the chain is on the cytoplasmic side. Residues 14 to 131 (ILVLDPPSDL…MDSKLRCVFE (118 aa)) form the MSP domain. Residues 50–53 (KVKT) form a phosphorylated FFAT motif binding region. K125 carries the N6-acetyllysine modification. A compositionally biased stretch (basic and acidic residues) spans 135-144 (ENDKLNDMEP). Positions 135 to 166 (ENDKLNDMEPSKAVPLNASKQDGPLPKPHSVS) are disordered. A Phosphoserine modification is found at S166. Residues 168 to 207 (NDTETRKLMEECKRLQGEMMKLSEENRHLRDEGLRLRKVA) are a coiled coil. T170 carries the post-translational modification Phosphothreonine. Residues S214, S216, and S219 each carry the phosphoserine modification. The chain crosses the membrane as a helical; Anchor for type IV membrane protein span at residues 228 to 248 (LPSLLVVIAAIFIGFFLGKFI).

It belongs to the VAMP-associated protein (VAP) (TC 9.B.17) family. Homodimer; disulfide-linked. Heterodimer with VAPB. Interacts with VAMP1, VAMP2, STX1A, BET1, SEC22C and with the C-terminal domain of OCLN. Interacts (via MSP domain) with OSBPL1A (via FFAT motif). Interacts (via MSP domain) with ZFYVE27; may retain ZFYVE27 in the endoplasmic reticulum and regulate its function in cell projections formation. Interacts with OSBP. Interacts (via C-terminus) with RSAD2/viperin (via C-terminus). Interacts with IFITM3. Interacts with OSBPL3 (phosphorylated form). Interacts with KIF5A in a ZFYVE27-dependent manner. Interacts (via MSP domain) with STARD3 (via phosphorylated FFAT motif); this interaction recruits VAPA to the endosome. Interacts with STARD3NL (via FFAT motif). Interacts with CERT1. Interacts with PLEKHA3 and SACM1L to form a ternary complex. Interacts with VPS13A (via FFAT motif). Interacts with RB1CC1 (via phosphorylated FFAT motif), MIGA2 (via phosphorylated FFAT motif), RMDN3 (via phosphorylated FFAT motif), KCNB1 (via phosphorylated FFAT motif) and KCNB2 (via phosphorylated FFAT motif). Interacts (via MSP domain) with WDR44; the interactions connect the endoplasmic reticulum (ER) with the endosomal tubule. Ubiquitous.

The protein localises to the endoplasmic reticulum membrane. Its subcellular location is the cell membrane. It localises to the cell junction. It is found in the tight junction. The protein resides in the nucleus membrane. Functionally, endoplasmic reticulum (ER)-anchored protein that mediates the formation of contact sites between the ER and endosomes via interaction with FFAT motif-containing proteins such as STARD3 or WDR44. STARD3-VAPA interaction enables cholesterol transfer from the ER to endosomes. Via interaction with WDR44 participates in neosynthesized protein export. In addition, recruited to the plasma membrane through OSBPL3 binding. The OSBPL3-VAPA complex stimulates RRAS signaling which in turn attenuates integrin beta-1 (ITGB1) activation at the cell surface. With OSBPL3, may regulate ER morphology. May play a role in vesicle trafficking. This Rattus norvegicus (Rat) protein is Vesicle-associated membrane protein-associated protein A.